The following is a 349-amino-acid chain: Probable ethanolamine kinase A (349 aa).

Belongs to the choline/ethanolamine kinase family.

Its subcellular location is the cytoplasm. The enzyme catalyses ethanolamine + ATP = phosphoethanolamine + ADP + H(+). It functions in the pathway phospholipid metabolism; phosphatidylethanolamine biosynthesis; phosphatidylethanolamine from ethanolamine: step 1/3. In terms of biological role, highly specific for ethanolamine phosphorylation. May be a rate-controlling step in phosphatidylethanolamine biosynthesis. This chain is Probable ethanolamine kinase A (etnkA), found in Dictyostelium discoideum (Social amoeba).